Reading from the N-terminus, the 872-residue chain is Probable GPI-anchored adhesin-like protein PGA25 (872 aa).

The first 19 residues, 1–19, serve as a signal peptide directing secretion; that stretch reads MKVTAVSSVLLTVAALTNA. A compositionally biased stretch (low complexity) spans 43–65; it reads PAAAPAAQPAAQPTTQSPADQPT. Disordered regions lie at residues 43-383, 492-517, and 623-809; these read PAAA…TIIP, KPTG…DETD, and PDDW…ECDT. The span at 66-83 shows a compositional bias: polar residues; sequence VQSPVSSDQPSTAQPVAQ. Low complexity-rich tracts occupy residues 84 to 110 and 125 to 171; these read NNLL…TRST and SSEA…SSSS. Asn-92 carries N-linked (GlcNAc...) asparagine glycosylation. The span at 196–207 shows a compositional bias: acidic residues; it reads ETDDEDCVEETE. 3 stretches are compositionally biased toward low complexity: residues 208-225, 242-260, and 274-293; these read SPTS…VATT, SSAP…SSTT, and SSVP…NTTT. An N-linked (GlcNAc...) asparagine glycan is attached at Asn-290. Residues 317-328 show a composition bias toward acidic residues; sequence AEEDDEECEDPT. Low complexity predominate over residues 349–363; sequence TSQSKTSVSSVVSKS. The span at 366–376 shows a compositional bias: acidic residues; that stretch reads EDDDDETECET. The segment covering 495-506 has biased composition (polar residues); that stretch reads GSGSITVLPTKS. Acidic residues-rich tracts occupy residues 624–635 and 646–659; these read DDWEDDGYEGED and DDGE…DDGE. Gly residues-rich tracts occupy residues 666–692, 701–710, and 731–740; these read SSSG…GSGS, SSGGTWGGSG, and SWWGGSGSGS. Low complexity predominate over residues 741–760; sequence SSGSSSGVSSGDSGSSSVTG. The span at 761–771 shows a compositional bias: gly residues; the sequence is GSSGSWWGGSG. Residues 780–808 show a composition bias toward acidic residues; it reads DGYDDEDDQTPEPECDDEDDSWDDDEECD. A lipid anchor (GPI-anchor amidated alanine) is attached at Ala-845. Residues 846–872 constitute a propeptide, removed in mature form; it reads QSVTQIENIGGKVSASGLFVVLGLLLI.

Belongs to the HYR1/IFF family. The GPI-anchor is attached to the protein in the endoplasmic reticulum and serves to target the protein to the cell surface. There, the glucosamine-inositol phospholipid moiety is cleaved off and the GPI-modified mannoprotein is covalently attached via its lipidless GPI glycan remnant to the 1,6-beta-glucan of the outer cell wall layer.

Its subcellular location is the secreted. The protein resides in the cell wall. It is found in the membrane. In terms of biological role, probable GPI-anchored cell wall protein involved in cell wall organization, hyphal growth, as well as in host-fungal interaction and virulence. This chain is Probable GPI-anchored adhesin-like protein PGA25 (PGA25), found in Candida albicans (strain SC5314 / ATCC MYA-2876) (Yeast).